An 86-amino-acid polypeptide reads, in one-letter code: Neurotoxin E1x (86 aa).

The signal sequence occupies residues 1–19 (MNSLLMITACLVVIGTVWA). An LCN-type CS-alpha/beta domain is found at 20 to 84 (KEGYLVDVKG…TWPLPNKTCG (65 aa)). Cystine bridges form between cysteine 30–cysteine 83, cysteine 34–cysteine 59, cysteine 43–cysteine 64, and cysteine 47–cysteine 66. Position 83 is a cysteine amide (cysteine 83).

It belongs to the long (4 C-C) scorpion toxin superfamily. Sodium channel inhibitor family. Beta subfamily. Expressed by the venom gland.

The protein resides in the secreted. In terms of biological role, binds to sodium channels (Nav) and inhibits the inactivation of the activated channels, thereby blocking neuronal transmission. The polypeptide is Neurotoxin E1x (Centruroides sculpturatus (Arizona bark scorpion)).